Reading from the N-terminus, the 244-residue chain is ATP synthase subunit a (244 aa).

The next 6 helical transmembrane spans lie at 25–45 (ISFT…LLIF), 85–105 (YFAF…FGMI), 115–135 (IIVT…IGFM), 144–164 (LFVP…IEII), 193–213 (GFVI…SVAL), and 216–236 (LEIL…CIYL).

The protein belongs to the ATPase A chain family. As to quaternary structure, F-type ATPases have 2 components, CF(1) - the catalytic core - and CF(0) - the membrane proton channel. CF(1) has five subunits: alpha(3), beta(3), gamma(1), delta(1), epsilon(1). CF(0) has three main subunits: a(1), b(2) and c(9-12). The alpha and beta chains form an alternating ring which encloses part of the gamma chain. CF(1) is attached to CF(0) by a central stalk formed by the gamma and epsilon chains, while a peripheral stalk is formed by the delta and b chains.

It localises to the cell inner membrane. Functionally, key component of the proton channel; it plays a direct role in the translocation of protons across the membrane. In Pelagibacter ubique (strain HTCC1062), this protein is ATP synthase subunit a.